Reading from the N-terminus, the 142-residue chain is Large ribosomal subunit protein uL13 (142 aa).

The protein belongs to the universal ribosomal protein uL13 family. As to quaternary structure, part of the 50S ribosomal subunit.

In terms of biological role, this protein is one of the early assembly proteins of the 50S ribosomal subunit, although it is not seen to bind rRNA by itself. It is important during the early stages of 50S assembly. In Alkaliphilus metalliredigens (strain QYMF), this protein is Large ribosomal subunit protein uL13.